We begin with the raw amino-acid sequence, 314 residues long: Curved DNA-binding protein (314 aa).

Positions 5–69 (DYYKILDVEP…EKRAEYDELR (65 aa)) constitute a J domain. The disordered stretch occupies residues 73–92 (RQGRPFQTPPGWQSRAGAGA).

The protein resides in the cytoplasm. The protein localises to the nucleoid. In terms of biological role, DNA-binding protein that preferentially recognizes a curved DNA sequence. It is probably a functional analog of DnaJ; displays overlapping activities with DnaJ, but functions under different conditions, probably acting as a molecular chaperone in an adaptive response to environmental stresses other than heat shock. Lacks autonomous chaperone activity; binds native substrates and targets them for recognition by DnaK. Its activity is inhibited by the binding of CbpM. This Pseudomonas syringae pv. tomato (strain ATCC BAA-871 / DC3000) protein is Curved DNA-binding protein.